The following is a 273-amino-acid chain: MERTIGIDAGGTLTKIAYFNEKRLLTFEKFYSHEQHKIIDWIKNNNGIKQICITGGKSKLLQQLLTGSYKIIELNEFEATLAGVQYILKEEKHAIRNFILTNIGTGTSIHYVYNEQYIRAGGTGVGGGTIMGLSKLLTNIDHFEDVIPLTKVGSRKELDITVGDIYGGILSPIDNNLTASNFGKAAITESNNSSSDILATVQGLVGEVVTALSLQFAETKNIEHIIYIGSTLCNNVQLQHIISSYTEYQNKTPIFLQDGGNSGAIGALLHATK.

8–15 (DAGGTLTK) lines the ATP pocket. The active-site Proton acceptor is the E76. Residues T105, 127–131 (GGTIM), F143, and S230 each bind ATP.

The protein belongs to the type II pantothenate kinase family. In terms of assembly, homodimer.

It localises to the cytoplasm. It carries out the reaction (R)-pantothenate + ATP = (R)-4'-phosphopantothenate + ADP + H(+). Its pathway is cofactor biosynthesis; coenzyme A biosynthesis; CoA from (R)-pantothenate: step 1/5. Its function is as follows. Catalyzes the phosphorylation of pantothenate (Pan), the first step in CoA biosynthesis. This is Type II pantothenate kinase from Bacillus cereus (strain G9842).